A 431-amino-acid chain; its full sequence is Glutamate-1-semialdehyde 2,1-aminomutase (431 aa).

Lysine 265 carries the N6-(pyridoxal phosphate)lysine modification.

Belongs to the class-III pyridoxal-phosphate-dependent aminotransferase family. HemL subfamily. As to quaternary structure, homodimer. It depends on pyridoxal 5'-phosphate as a cofactor.

It is found in the cytoplasm. The catalysed reaction is (S)-4-amino-5-oxopentanoate = 5-aminolevulinate. It participates in porphyrin-containing compound metabolism; protoporphyrin-IX biosynthesis; 5-aminolevulinate from L-glutamyl-tRNA(Glu): step 2/2. The sequence is that of Glutamate-1-semialdehyde 2,1-aminomutase from Vibrio campbellii (strain ATCC BAA-1116).